The primary structure comprises 316 residues: L-lactate dehydrogenase (316 aa).

NAD(+) is bound at residue 34–39 (DVVEGV). Arg89, Asn121, and Arg152 together coordinate substrate. Asn121 is an NAD(+) binding site. The active-site Proton acceptor is His172.

It belongs to the LDH/MDH superfamily. LDH family. Homotetramer.

The catalysed reaction is (S)-lactate + NAD(+) = pyruvate + NADH + H(+). It participates in fermentation; pyruvate fermentation to lactate; (S)-lactate from pyruvate: step 1/1. This chain is L-lactate dehydrogenase, found in Botryococcus braunii (Green alga).